A 365-amino-acid chain; its full sequence is Histidinol-phosphate aminotransferase (365 aa).

The residue at position 222 (Lys222) is an N6-(pyridoxal phosphate)lysine.

Belongs to the class-II pyridoxal-phosphate-dependent aminotransferase family. Histidinol-phosphate aminotransferase subfamily. In terms of assembly, homodimer. Pyridoxal 5'-phosphate is required as a cofactor.

It carries out the reaction L-histidinol phosphate + 2-oxoglutarate = 3-(imidazol-4-yl)-2-oxopropyl phosphate + L-glutamate. It functions in the pathway amino-acid biosynthesis; L-histidine biosynthesis; L-histidine from 5-phospho-alpha-D-ribose 1-diphosphate: step 7/9. This chain is Histidinol-phosphate aminotransferase, found in Geobacillus thermodenitrificans (strain NG80-2).